Here is a 232-residue protein sequence, read N- to C-terminus: Peptidyl-prolyl cis-trans isomerase CYP26-1 (232 aa).

A PPIase cyclophilin-type domain is found at 7–166 (FFDLTVDGKP…KPVVIADCGE (160 aa)). A glycan (N-linked (GlcNAc...) asparagine) is linked at N108. A helical membrane pass occupies residues 212 to 232 (YYLINIVVACMVLMCFWSWFV).

Belongs to the cyclophilin-type PPIase family. In terms of tissue distribution, expressed only in flowers.

It is found in the membrane. It catalyses the reaction [protein]-peptidylproline (omega=180) = [protein]-peptidylproline (omega=0). PPIases accelerate the folding of proteins. It catalyzes the cis-trans isomerization of proline imidic peptide bonds in oligopeptides. This Arabidopsis thaliana (Mouse-ear cress) protein is Peptidyl-prolyl cis-trans isomerase CYP26-1 (CYP26-1).